The primary structure comprises 349 residues: tRNA uridine(34) hydroxylase (349 aa).

Residues 146–240 (DDPDAVFIDM…YARRAREQGL (95 aa)) enclose the Rhodanese domain. Cysteine 200 (cysteine persulfide intermediate) is an active-site residue. A compositionally biased stretch (basic and acidic residues) spans 316 to 328 (EEQRRRRAGRENG). Residues 316–349 (EEQRRRRAGRENGNKIFNKSRGRLNTKLGIPDPE) form a disordered region.

This sequence belongs to the TrhO family.

It catalyses the reaction uridine(34) in tRNA + AH2 + O2 = 5-hydroxyuridine(34) in tRNA + A + H2O. Functionally, catalyzes oxygen-dependent 5-hydroxyuridine (ho5U) modification at position 34 in tRNAs. This is tRNA uridine(34) hydroxylase from Enterobacter sp. (strain 638).